The primary structure comprises 72 residues: Large ribosomal subunit protein bL31c (72 aa).

It belongs to the bacterial ribosomal protein bL31 family. Type A subfamily. In terms of assembly, part of the 50S ribosomal subunit.

The protein resides in the plastid. The protein localises to the chloroplast. Functionally, binds the 23S rRNA. This Thalassiosira pseudonana (Marine diatom) protein is Large ribosomal subunit protein bL31c (rpl31).